The following is a 1345-amino-acid chain: CRISPR-associated endonuclease Cas9 (1345 aa).

The For RuvC-like nuclease domain role is filled by D10. 3 residues coordinate Mg(2+): D10, E762, and E766. Residues 770 to 921 (TNQGRRNSQQ…DKAGFIKRQL (152 aa)) enclose the HNH Cas9-type domain. H840 functions as the Proton acceptor for HNH nuclease domain in the catalytic mechanism. H983 contributes to the Mg(2+) binding site.

This sequence belongs to the CRISPR-associated protein Cas9 family. Subtype II-A subfamily. In terms of assembly, monomer. Binds crRNA and tracrRNA. Mg(2+) is required as a cofactor.

Functionally, CRISPR (clustered regularly interspaced short palindromic repeat) is an adaptive immune system that provides protection against mobile genetic elements (viruses, transposable elements and conjugative plasmids). CRISPR clusters contain spacers, sequences complementary to antecedent mobile elements, and target invading nucleic acids. CRISPR clusters are transcribed and processed into CRISPR RNA (crRNA). In type II CRISPR systems correct processing of pre-crRNA requires a trans-encoded small RNA (tracrRNA), endogenous ribonuclease 3 (rnc) and this protein. The tracrRNA serves as a guide for ribonuclease 3-aided processing of pre-crRNA. Subsequently Cas9/crRNA/tracrRNA endonucleolytically cleaves linear or circular dsDNA target complementary to the spacer; Cas9 is inactive in the absence of the 2 guide RNAs (gRNA). Cas9 recognizes the protospacer adjacent motif (PAM) in the CRISPR repeat sequences to help distinguish self versus nonself, as targets within the bacterial CRISPR locus do not have PAMs. PAM recognition is also required for catalytic activity. Complements the gRNA coprocessing defect in a cas9 deletion in S.pyogenes strain 370 and cuts target plasmid in Cas9:gRNAs mixing experiments with S.thermophilus CRISPR3 from strain LMD-9. In Streptococcus mutans serotype c (strain ATCC 700610 / UA159), this protein is CRISPR-associated endonuclease Cas9.